Reading from the N-terminus, the 32-residue chain is Beta-1,4-galactosyltransferase 1 (32 aa).

The protein belongs to the glycosyltransferase 7 family. Mn(2+) is required as a cofactor. Post-translationally, the soluble form derives from the membrane form by proteolytic processing.

Its subcellular location is the golgi apparatus. It is found in the golgi stack membrane. It localises to the secreted. The protein resides in the cell membrane. The protein localises to the cell projection. Its subcellular location is the filopodium. It catalyses the reaction D-glucose + UDP-alpha-D-galactose = lactose + UDP + H(+). The catalysed reaction is an N-acetyl-beta-D-glucosaminyl derivative + UDP-alpha-D-galactose = a beta-D-galactosyl-(1-&gt;4)-N-acetyl-beta-D-glucosaminyl derivative + UDP + H(+). It carries out the reaction N-acetyl-D-glucosamine + UDP-alpha-D-galactose = beta-D-galactosyl-(1-&gt;4)-N-acetyl-D-glucosamine + UDP + H(+). The enzyme catalyses a beta-D-GlcNAc-(1-&gt;3)-beta-D-Gal-(1-&gt;4)-beta-D-Glc-(1&lt;-&gt;1)-Cer(d18:1(4E)) + UDP-alpha-D-galactose = a neolactoside nLc4Cer(d18:1(4E)) + UDP + H(+). It catalyses the reaction a beta-D-glucosylceramide + UDP-alpha-D-galactose = a beta-D-galactosyl-(1-&gt;4)-beta-D-glucosyl-(1&lt;-&gt;1)-ceramide + UDP + H(+). The catalysed reaction is a neolactoside IV(3)-beta-GlcNAc-nLc4Cer + UDP-alpha-D-galactose = a neolactoside nLc6Cer + UDP + H(+). It participates in protein modification; protein glycosylation. In terms of biological role, this protein is responsible for the synthesis of complex-type N-linked oligosaccharides in many glycoproteins as well as the carbohydrate moieties of glycolipids. In Rattus norvegicus (Rat), this protein is Beta-1,4-galactosyltransferase 1.